Here is a 490-residue protein sequence, read N- to C-terminus: MADAVTPRDEDYSQWYQDVVRNGQLAENSPARGCMIIKPNGMALWENMRDQLDQMFKDTGHQNYYFPLFIPERYMEREAEHVEGFAKECAVVTHSRLTQDEEGDLVPDPESELGENYIVRPTSETIIWDTYSKWIQSYRDLPLLYNQWANVVRWEMRPRLFLRTAEFLWQEGHTAHATETEAVEEAERMLDVYTTFAEEYMAMPVLQGRKTESERFPGAVDTYCIEAMMQDGKALQAGTSHFLGQNFAKAFDCTFTNEDNEEEYVWATSWGVSTRLIGGLIMTHSDDQGLVLPPKLAPHQVVIVPLFFDDDQEGPVMETCERLQERLEDHGIRVKMDQNHTQSPGWRFSEHELRGVPLRLAIGPRDLENDNVEMARRDTQEKEVVPQDGIAERVSDTLDDIQHALHERAQDRQADNTRVVEDYDAFREVIGRGGFAWAHWDGTPETEARIQEETSATIRLIPFDREDHEEGEDMLTGEPSEGRVLFAQAY.

Belongs to the class-II aminoacyl-tRNA synthetase family. ProS type 3 subfamily. Homodimer.

It localises to the cytoplasm. The enzyme catalyses tRNA(Pro) + L-proline + ATP = L-prolyl-tRNA(Pro) + AMP + diphosphate. Catalyzes the attachment of proline to tRNA(Pro) in a two-step reaction: proline is first activated by ATP to form Pro-AMP and then transferred to the acceptor end of tRNA(Pro). The protein is Proline--tRNA ligase of Salinibacter ruber (strain DSM 13855 / M31).